A 243-amino-acid chain; its full sequence is MARNRTTSKKNVQSKRLIDRVVPMDKIKKVGVAKKKTVEHTKEGFSVVNGKLVSSNDVGVLLREAQGAIDKRTNVSQRNRKKGIKNNRPHKDINSSPDWGNAHRGTDWQSEKANGMNRAKNSRNFTTNIKLQRQHFGEEIQGGSQLVISTNSDASDKLLMLFNLTLGVNQENLKNVLENISQVQIAQIRVRDLPSGSATAKVRLAYPTTQSLEKVRKLFHGALVDGRRIQVVIASDESSHLSY.

Positions 71-120 (KRTNVSQRNRKKGIKNNRPHKDINSSPDWGNAHRGTDWQSEKANGMNRAK) are disordered. A compositionally biased stretch (basic residues) spans 78–88 (RNRKKGIKNNR). S96 is modified (phosphoserine).

This is an uncharacterized protein from Saccharomyces cerevisiae (strain ATCC 204508 / S288c) (Baker's yeast).